We begin with the raw amino-acid sequence, 39 residues long: Sarcotoxin-1C (39 aa).

Residue Arg39 is modified to Arginine amide.

The protein belongs to the cecropin family.

The protein localises to the secreted. Functionally, sarcotoxins, which are potent bactericidal proteins, are produced in response to injury. They are cytotoxic to both Gram-positive and Gram-negative bacteria. The protein is Sarcotoxin-1C of Sarcophaga peregrina (Flesh fly).